The sequence spans 530 residues: Na(+)/H(+) antiporter NhaB (530 aa).

12 consecutive transmembrane segments (helical) span residues 13-33, 34-54, 90-110, 121-141, 145-165, 205-225, 241-261, 306-326, 351-371, 393-413, 455-475, and 481-501; these read FLGK…VINP, LVFF…EFIF, LVAN…IYFM, ILIG…TAAF, FLDA…FYAI, LLMH…VGEP, FIIR…LTCI, GLIA…VGLI, EEAL…AVII, LALF…VFVG, GQAA…QLSY, and MALP…IFFL.

The protein belongs to the NhaB Na(+)/H(+) (TC 2.A.34) antiporter family.

It localises to the cell inner membrane. The enzyme catalyses 2 Na(+)(in) + 3 H(+)(out) = 2 Na(+)(out) + 3 H(+)(in). Functionally, na(+)/H(+) antiporter that extrudes sodium in exchange for external protons. This chain is Na(+)/H(+) antiporter NhaB, found in Aliivibrio fischeri (strain ATCC 700601 / ES114) (Vibrio fischeri).